The following is a 253-amino-acid chain: uncharacterized protein (253 aa).

10–34 contacts NADP(+); sequence LVTGASSGLGRGLALWLARRGVRVF. Position 142 (S142) interacts with substrate. Catalysis depends on Y155, which acts as the Proton acceptor.

The protein belongs to the short-chain dehydrogenases/reductases (SDR) family.

This is an uncharacterized protein from Myxococcus xanthus (strain DK1622).